The primary structure comprises 61 residues: Metallothionein-2B (61 aa).

N-acetylmethionine is present on Met1. The interval 1–29 is beta; sequence MDPNCSCAAGGSCTCAGSCKCKDCRCTSC. Residues Cys5, Cys7, Cys13, Cys15, Cys19, Cys21, Cys24, Cys26, Cys29, Cys33, Cys34, Cys36, Cys37, Cys41, Cys44, Cys48, Cys50, Cys57, Cys59, and Cys60 each coordinate a divalent metal cation. Residues 30 to 61 form an alpha region; sequence KKSCCSCCPAGCARCAQGCICKGASDKCSCCA.

Belongs to the metallothionein superfamily. Type 1 family. As to quaternary structure, monomer.

Metallothioneins have a high content of cysteine residues that bind various heavy metals; these proteins are transcriptionally regulated by both heavy metals and glucocorticoids. The chain is Metallothionein-2B (MT2B) from Sus scrofa (Pig).